The primary structure comprises 520 residues: Transactivator/viroplasmin protein (520 aa).

A disordered region spans residues 486-520 (VQDASADSGPKDGPPPTRSIVEKEDVPTTSSKQVD).

The protein belongs to the caulimoviridae viroplasmin family.

It is found in the host cytoplasm. Enhances the ribosomal termination-reinitiation event leading to the translation of major open reading frames on the polycistronic viral RNAs. This chain is Transactivator/viroplasmin protein, found in Cauliflower mosaic virus (strain NY8153) (CaMV).